The sequence spans 131 residues: Profilin-4 (131 aa).

A disulfide bridge links Cys-13 with Cys-115. An Involved in PIP2 interaction motif is present at residues 81–97; the sequence is AVIRGKKGAGGITVKKT. Thr-111 carries the phosphothreonine modification.

The protein belongs to the profilin family. In terms of assembly, occurs in many kinds of cells as a complex with monomeric actin in a 1:1 ratio. Phosphorylated by MAP kinases.

It is found in the cytoplasm. The protein resides in the cytoskeleton. Its function is as follows. Binds to actin and affects the structure of the cytoskeleton. At high concentrations, profilin prevents the polymerization of actin, whereas it enhances it at low concentrations. This Olea europaea (Common olive) protein is Profilin-4.